The following is a 92-amino-acid chain: Transcription factor ILI6 (92 aa).

The segment at 1–20 (MSSRRSRSRQSGSSRITDEQ) is disordered. Positions 5–59 (RSRSRQSGSSRITDEQISDLVSKLQDLLPEARLRSNDRVPSSRVLQETCNYIRSL) constitute a bHLH domain.

It belongs to the bHLH protein family. Interacts with APG.

Its subcellular location is the nucleus. Atypical and probable non DNA-binding bHLH transcription factor that acts as a positive regulator of grain size. Binds the transcription repressor APG and forms a heterodimer of antagonistic bHLH transcription factors that regulates grain length and weight by controlling cell elongation in lemma and palea. May be involved in the control of lamina inclination through brassinosteroid signaling pathway. In Oryza sativa subsp. indica (Rice), this protein is Transcription factor ILI6 (ILI6).